Here is a 430-residue protein sequence, read N- to C-terminus: Enolase (430 aa).

A (2R)-2-phosphoglycerate-binding site is contributed by Gln163. Glu205 serves as the catalytic Proton donor. Residues Asp242, Glu287, and Asp314 each coordinate Mg(2+). (2R)-2-phosphoglycerate is bound by residues Lys339, Arg368, Ser369, and Lys390. Catalysis depends on Lys339, which acts as the Proton acceptor.

It belongs to the enolase family. Mg(2+) serves as cofactor.

The protein localises to the cytoplasm. It localises to the secreted. It is found in the cell surface. The enzyme catalyses (2R)-2-phosphoglycerate = phosphoenolpyruvate + H2O. It functions in the pathway carbohydrate degradation; glycolysis; pyruvate from D-glyceraldehyde 3-phosphate: step 4/5. In terms of biological role, catalyzes the reversible conversion of 2-phosphoglycerate (2-PG) into phosphoenolpyruvate (PEP). It is essential for the degradation of carbohydrates via glycolysis. The polypeptide is Enolase (Bacillus cytotoxicus (strain DSM 22905 / CIP 110041 / 391-98 / NVH 391-98)).